The chain runs to 259 residues: Ribosomal RNA small subunit methyltransferase A (259 aa).

Residues asparagine 13, leucine 15, glycine 40, glutamate 61, aspartate 85, and asparagine 103 each contribute to the S-adenosyl-L-methionine site.

The protein belongs to the class I-like SAM-binding methyltransferase superfamily. rRNA adenine N(6)-methyltransferase family. RsmA subfamily.

Its subcellular location is the cytoplasm. The enzyme catalyses adenosine(1518)/adenosine(1519) in 16S rRNA + 4 S-adenosyl-L-methionine = N(6)-dimethyladenosine(1518)/N(6)-dimethyladenosine(1519) in 16S rRNA + 4 S-adenosyl-L-homocysteine + 4 H(+). Functionally, specifically dimethylates two adjacent adenosines (A1518 and A1519) in the loop of a conserved hairpin near the 3'-end of 16S rRNA in the 30S particle. May play a critical role in biogenesis of 30S subunits. This chain is Ribosomal RNA small subunit methyltransferase A, found in Neisseria meningitidis serogroup B (strain ATCC BAA-335 / MC58).